The following is a 529-amino-acid chain: Bifunctional purine biosynthesis protein PurH (529 aa).

The MGS-like domain maps to 1-148 (MQQRRPVRRA…KNHKDVAIVV (148 aa)).

It belongs to the PurH family.

The enzyme catalyses (6R)-10-formyltetrahydrofolate + 5-amino-1-(5-phospho-beta-D-ribosyl)imidazole-4-carboxamide = 5-formamido-1-(5-phospho-D-ribosyl)imidazole-4-carboxamide + (6S)-5,6,7,8-tetrahydrofolate. It catalyses the reaction IMP + H2O = 5-formamido-1-(5-phospho-D-ribosyl)imidazole-4-carboxamide. Its pathway is purine metabolism; IMP biosynthesis via de novo pathway; 5-formamido-1-(5-phospho-D-ribosyl)imidazole-4-carboxamide from 5-amino-1-(5-phospho-D-ribosyl)imidazole-4-carboxamide (10-formyl THF route): step 1/1. It participates in purine metabolism; IMP biosynthesis via de novo pathway; IMP from 5-formamido-1-(5-phospho-D-ribosyl)imidazole-4-carboxamide: step 1/1. This chain is Bifunctional purine biosynthesis protein PurH, found in Salmonella paratyphi A (strain ATCC 9150 / SARB42).